Here is an 811-residue protein sequence, read N- to C-terminus: Zinc finger CCCH domain-containing protein 11A (811 aa).

3 consecutive C3H1-type zinc fingers follow at residues 2–30 (PNQG…HCEA), 32–58 (LGNE…HMEI), and 61–87 (KRSE…HHNR). The residue at position 109 (Ser-109) is a Phosphoserine. Residues Lys-115 and Lys-125 each participate in a glycyl lysine isopeptide (Lys-Gly) (interchain with G-Cter in SUMO2) cross-link. Ser-133 carries the phosphoserine modification. Disordered stretches follow at residues 140 to 195 (MKVE…GLRV), 224 to 258 (KKMK…KENV), 286 to 352 (GKRK…EKVN), and 368 to 434 (ERAS…TCIK). Residue Lys-141 forms a Glycyl lysine isopeptide (Lys-Gly) (interchain with G-Cter in SUMO2) linkage. Ser-150 and Ser-172 each carry phosphoserine. A compositionally biased stretch (acidic residues) spans 161-176 (ADDDEDDDDQFSEEGD). Ser-291 bears the Phosphoserine mark. Composition is skewed to basic and acidic residues over residues 310–323 (KKVE…DKTP) and 368–391 (ERAS…KTDD). Thr-322 carries the phosphothreonine modification. Positions 363–424 (EEILLERASQ…KHRQQEAERQ (62 aa)) form a coiled coil. Ser-371 is modified (phosphoserine). Over residues 392-403 (STSGARSSSTIR) the composition is skewed to polar residues. Positions 418–434 (QQEAERQKSKKDTTCIK) are enriched in basic and acidic residues. A Glycyl lysine isopeptide (Lys-Gly) (interchain with G-Cter in SUMO2) cross-link involves residue Lys-479. A disordered region spans residues 483 to 550 (ALRVQQSSES…KEASGETTGV (68 aa)). The span at 487 to 499 (QQSSESSTSSPSQ) shows a compositional bias: low complexity. A Glycyl lysine isopeptide (Lys-Gly) (interchain with G-Cter in SUMO2) cross-link involves residue Lys-620. Residues 716-769 (TVPEAENPRDSLVLPPTQSSSDSSPPEVSGPSSSQMSMKTRRLSSASTGKPQLS) form a disordered region. Over residues 730 to 749 (PPTQSSSDSSPPEVSGPSSS) the composition is skewed to low complexity. Residues 750–766 (QMSMKTRRLSSASTGKP) are compositionally biased toward polar residues.

In terms of assembly, interacts with TREX complex components THOC2, DDX39 and POLDIP3; the interactions are ATP-dependent. Interacts with PABPN1; this interaction retains ZC3H11A in nuclear speckles. Interacts with KPNA3.

Its subcellular location is the nucleus speckle. Its function is as follows. Through its association with TREX complex components, may participate in the export and post-transcriptional coordination of selected mRNA transcripts, including those required to maintain the metabolic processes in embryonic cells. Binds RNA. The chain is Zinc finger CCCH domain-containing protein 11A (ZC3H11A) from Pongo abelii (Sumatran orangutan).